Here is a 294-residue protein sequence, read N- to C-terminus: Lipoyl synthase (294 aa).

The [4Fe-4S] cluster site is built by C38, C43, C49, C64, C68, C71, and S277. The Radical SAM core domain maps to 50–266 (WSRGTATFLL…RSFAEGAGFR (217 aa)).

Belongs to the radical SAM superfamily. Lipoyl synthase family. Requires [4Fe-4S] cluster as cofactor.

The protein localises to the cytoplasm. The enzyme catalyses [[Fe-S] cluster scaffold protein carrying a second [4Fe-4S](2+) cluster] + N(6)-octanoyl-L-lysyl-[protein] + 2 oxidized [2Fe-2S]-[ferredoxin] + 2 S-adenosyl-L-methionine + 4 H(+) = [[Fe-S] cluster scaffold protein] + N(6)-[(R)-dihydrolipoyl]-L-lysyl-[protein] + 4 Fe(3+) + 2 hydrogen sulfide + 2 5'-deoxyadenosine + 2 L-methionine + 2 reduced [2Fe-2S]-[ferredoxin]. It functions in the pathway protein modification; protein lipoylation via endogenous pathway; protein N(6)-(lipoyl)lysine from octanoyl-[acyl-carrier-protein]: step 2/2. In terms of biological role, catalyzes the radical-mediated insertion of two sulfur atoms into the C-6 and C-8 positions of the octanoyl moiety bound to the lipoyl domains of lipoate-dependent enzymes, thereby converting the octanoylated domains into lipoylated derivatives. In Pelodictyon phaeoclathratiforme (strain DSM 5477 / BU-1), this protein is Lipoyl synthase.